A 562-amino-acid polypeptide reads, in one-letter code: Protein wntless (562 aa).

At Met-1–Lys-13 the chain is on the cytoplasmic side. The chain crosses the membrane as a helical span at residues Leu-14–Leu-34. Topologically, residues Tyr-35 to Gln-239 are lumenal. 2 N-linked (GlcNAc...) asparagine glycosylation sites follow: Asn-58 and Asn-103. A helical membrane pass occupies residues Val-240–Trp-260. Residues Arg-261–Pro-270 are Cytoplasmic-facing. Residues Ala-271–Leu-291 form a helical membrane-spanning segment. Topologically, residues Glu-292–Gln-311 are lumenal. The chain crosses the membrane as a helical span at residues Gly-312–Ile-332. The Cytoplasmic segment spans residues Gln-333–Arg-344. A helical transmembrane segment spans residues Tyr-345–Cys-365. At Glu-366 to Ser-390 the chain is on the lumenal side. The helical transmembrane segment at Phe-391 to Trp-411 threads the bilayer. At Lys-412–Arg-441 the chain is on the cytoplasmic side. A helical transmembrane segment spans residues Phe-442–Met-462. The Lumenal segment spans residues Gly-463–Ser-482. A helical membrane pass occupies residues Ala-483–Tyr-503. The Cytoplasmic segment spans residues Ala-504–Asp-562.

The protein belongs to the wntless family. In terms of assembly, interacts with wg; in the Golgi. Interacts with Vps35, a component of the retromer complex; wls stability is regulated by Vps35.

Its subcellular location is the presynaptic cell membrane. The protein resides in the postsynaptic cell membrane. It localises to the cell membrane. The protein localises to the endoplasmic reticulum membrane. It is found in the endosome membrane. Its subcellular location is the golgi apparatus membrane. In terms of biological role, a segment polarity gene required for wingless (wg)-dependent patterning processes, acting in both wg-sending cells and wg-target cells. In non-neuronal cells wls directs wg secretion. The wls traffic loop encompasses the Golgi, the cell surface, an endocytic compartment and a retrograde route leading back to the Golgi, and involves clathrin-mediated endocytosis and the retromer complex (a conserved protein complex consisting of Vps35 and Vps26). In neuronal cells (the larval motorneuron NMJ), the wg signal moves across the synapse via the release of wls-containing exosome-like vesicles. Postsynaptic wls is required for the trafficking of fz2 through the fz2-interacting protein Grip. The polypeptide is Protein wntless (Drosophila virilis (Fruit fly)).